A 299-amino-acid chain; its full sequence is Ribosomal protein L11 methyltransferase (299 aa).

Positions 140, 161, 183, and 232 each coordinate S-adenosyl-L-methionine.

Belongs to the methyltransferase superfamily. PrmA family.

It is found in the cytoplasm. It carries out the reaction L-lysyl-[protein] + 3 S-adenosyl-L-methionine = N(6),N(6),N(6)-trimethyl-L-lysyl-[protein] + 3 S-adenosyl-L-homocysteine + 3 H(+). In terms of biological role, methylates ribosomal protein L11. The protein is Ribosomal protein L11 methyltransferase of Synechococcus elongatus (strain ATCC 33912 / PCC 7942 / FACHB-805) (Anacystis nidulans R2).